The primary structure comprises 262 residues: Phosphonates import ATP-binding protein PhnC (262 aa).

The ABC transporter domain occupies 5–253 (IRVEKLAKTF…RFDHLYRSIN (249 aa)). Residue 37–44 (GPSGSGKS) coordinates ATP.

This sequence belongs to the ABC transporter superfamily. Phosphonates importer (TC 3.A.1.9.1) family. As to quaternary structure, the complex is composed of two ATP-binding proteins (PhnC), two transmembrane proteins (PhnE) and a solute-binding protein (PhnD).

The protein localises to the cell inner membrane. The catalysed reaction is phosphonate(out) + ATP + H2O = phosphonate(in) + ADP + phosphate + H(+). Functionally, part of the ABC transporter complex PhnCDE involved in phosphonates import. Responsible for energy coupling to the transport system. The chain is Phosphonates import ATP-binding protein PhnC from Escherichia coli O6:K15:H31 (strain 536 / UPEC).